The sequence spans 204 residues: Prephenate decarboxylase (204 aa).

This sequence belongs to the prephenate decarboxylase family.

It localises to the cytoplasm. It carries out the reaction prephenate + H(+) = 3-[(4R)-4-hydroxycyclohexa-1,5-dien-1-yl]-2-oxopropanoate + CO2. It functions in the pathway antibiotic biosynthesis; bacilysin biosynthesis. Part of the bacABCDEF operon responsible for the biosynthesis of the nonribosomally synthesized dipeptide antibiotic bacilysin, composed of L-alanine and L-anticapsin. Bacilysin is an irreversible inactivator of the glutaminase domain of glucosamine synthetase. BacA is an unusual prephenate decarboxylase that avoids the typical aromatization of the cyclohexadienol ring of prephenate. BacA catalyzes the protonation of prephenate (1-carboxy-4-hydroxy-alpha-oxo-2,5-cyclohexadiene-1-propanoic acid) at C6 position, followed by a decarboxylation to produce the endocyclic-delta(4),delta(8)-7R-dihydro-hydroxyphenylpyruvate (en-H2HPP). En-H2HPP is able to undergo a slow nonenzymatic isomerization to produce the exocyclic-delta(3),delta(5)-dihydro-hydroxyphenylpyruvate (ex-H2HPP). BacA isomerizes only the pro-R double bond in prephenate. This Bacillus amyloliquefaciens (Bacillus velezensis) protein is Prephenate decarboxylase.